A 196-amino-acid chain; its full sequence is Glycerol-3-phosphate acyltransferase (196 aa).

6 helical membrane-spanning segments follow: residues 5–25 (VYLL…IIFC), 53–73 (FSAL…VLLA), 80–100 (PSEI…PLFF), 107–127 (GVAT…AAGL), 130–150 (WLIV…TALI), and 153–173 (FYIW…CCLL).

Belongs to the PlsY family. Probably interacts with PlsX.

It localises to the cell inner membrane. The enzyme catalyses an acyl phosphate + sn-glycerol 3-phosphate = a 1-acyl-sn-glycero-3-phosphate + phosphate. It participates in lipid metabolism; phospholipid metabolism. Functionally, catalyzes the transfer of an acyl group from acyl-phosphate (acyl-PO(4)) to glycerol-3-phosphate (G3P) to form lysophosphatidic acid (LPA). This enzyme utilizes acyl-phosphate as fatty acyl donor, but not acyl-CoA or acyl-ACP. This is Glycerol-3-phosphate acyltransferase from Actinobacillus pleuropneumoniae serotype 7 (strain AP76).